The following is a 284-amino-acid chain: ATP phosphoribosyltransferase (284 aa).

It belongs to the ATP phosphoribosyltransferase family. Long subfamily. Mg(2+) is required as a cofactor.

The protein localises to the cytoplasm. It carries out the reaction 1-(5-phospho-beta-D-ribosyl)-ATP + diphosphate = 5-phospho-alpha-D-ribose 1-diphosphate + ATP. The protein operates within amino-acid biosynthesis; L-histidine biosynthesis; L-histidine from 5-phospho-alpha-D-ribose 1-diphosphate: step 1/9. Its activity is regulated as follows. Feedback inhibited by histidine. In terms of biological role, catalyzes the condensation of ATP and 5-phosphoribose 1-diphosphate to form N'-(5'-phosphoribosyl)-ATP (PR-ATP). Has a crucial role in the pathway because the rate of histidine biosynthesis seems to be controlled primarily by regulation of HisG enzymatic activity. The protein is ATP phosphoribosyltransferase of Corynebacterium kroppenstedtii (strain DSM 44385 / JCM 11950 / CIP 105744 / CCUG 35717).